We begin with the raw amino-acid sequence, 214 residues long: Probable transaldolase (214 aa).

Lys-83 acts as the Schiff-base intermediate with substrate in catalysis.

This sequence belongs to the transaldolase family. Type 3B subfamily.

It is found in the cytoplasm. It carries out the reaction D-sedoheptulose 7-phosphate + D-glyceraldehyde 3-phosphate = D-erythrose 4-phosphate + beta-D-fructose 6-phosphate. It functions in the pathway carbohydrate degradation; pentose phosphate pathway; D-glyceraldehyde 3-phosphate and beta-D-fructose 6-phosphate from D-ribose 5-phosphate and D-xylulose 5-phosphate (non-oxidative stage): step 2/3. In terms of biological role, transaldolase is important for the balance of metabolites in the pentose-phosphate pathway. The sequence is that of Probable transaldolase from Leptospira interrogans serogroup Icterohaemorrhagiae serovar copenhageni (strain Fiocruz L1-130).